The following is an 831-amino-acid chain: Periplasmic nitrate reductase (831 aa).

A signal peptide (tat-type signal) is located at residues 1–35 (MTISDSRRTFLKASAAAATASAAGIPLANGTAAEA). Residues 42–98 (IRWDKAACRFCGTGCSVLVGTKEGRVVATQGDPDAPVNRGLNCIKGYFLSKIMYGED) enclose the 4Fe-4S Mo/W bis-MGD-type domain. [4Fe-4S] cluster contacts are provided by cysteine 49, cysteine 52, cysteine 56, and cysteine 84. Mo-bis(molybdopterin guanine dinucleotide) is bound by residues lysine 86, glutamine 153, asparagine 178, cysteine 182, 215-222 (WGSNMAEM), 246-250 (STYEH), 265-267 (QTD), methionine 375, glutamine 379, asparagine 485, 511-512 (SD), lysine 534, aspartate 561, and 721-730 (TGRVLEHWHS). Tryptophan 797 lines the substrate pocket. Positions 805 and 822 each coordinate Mo-bis(molybdopterin guanine dinucleotide).

Belongs to the prokaryotic molybdopterin-containing oxidoreductase family. NasA/NapA/NarB subfamily. Component of the periplasmic nitrate reductase NapAB complex composed of NapA and NapB. [4Fe-4S] cluster is required as a cofactor. Mo-bis(molybdopterin guanine dinucleotide) serves as cofactor. In terms of processing, predicted to be exported by the Tat system. The position of the signal peptide cleavage has not been experimentally proven.

The protein resides in the periplasm. It carries out the reaction 2 Fe(II)-[cytochrome] + nitrate + 2 H(+) = 2 Fe(III)-[cytochrome] + nitrite + H2O. Functionally, catalytic subunit of the periplasmic nitrate reductase complex NapAB. Receives electrons from NapB and catalyzes the reduction of nitrate to nitrite. The protein is Periplasmic nitrate reductase of Dinoroseobacter shibae (strain DSM 16493 / NCIMB 14021 / DFL 12).